Here is a 266-residue protein sequence, read N- to C-terminus: Eukaryotic translation initiation factor 3 subunit J (266 aa).

2 disordered regions span residues 1–111 (MAPS…EKDA) and 217–266 (NEKM…DDFM). The span at 26–44 (DEEEEDVLDSWDAAEDSEV) shows a compositional bias: acidic residues. Positions 40–82 (EDSEVEREKAAKAAEAKAKAEAEAAANKKSKAQRIQEKKAQRK) form a coiled coil. Composition is skewed to basic and acidic residues over residues 45 to 61 (EREK…KAEA) and 73 to 85 (RIQE…KADA). Over residues 86 to 97 (DAEDSDDSDEDE) the composition is skewed to acidic residues. Composition is skewed to basic and acidic residues over residues 98–111 (AERR…EKDA) and 218–230 (EKMK…DKGN). Over residues 254-266 (SYDDDGLDDDDFM) the composition is skewed to acidic residues.

This sequence belongs to the eIF-3 subunit J family. Component of the eukaryotic translation initiation factor 3 (eIF-3) complex.

The protein localises to the cytoplasm. Its function is as follows. Component of the eukaryotic translation initiation factor 3 (eIF-3) complex, which is involved in protein synthesis of a specialized repertoire of mRNAs and, together with other initiation factors, stimulates binding of mRNA and methionyl-tRNAi to the 40S ribosome. The eIF-3 complex specifically targets and initiates translation of a subset of mRNAs involved in cell proliferation. This Aspergillus niger (strain ATCC MYA-4892 / CBS 513.88 / FGSC A1513) protein is Eukaryotic translation initiation factor 3 subunit J (hcr1).